The chain runs to 506 residues: Pyruvate kinase 2 (506 aa).

Serine 24 is modified (phosphoserine). A substrate-binding site is contributed by arginine 51. K(+)-binding residues include asparagine 53, serine 55, aspartate 86, and threonine 87. 53 to 56 serves as a coordination point for ATP; the sequence is NFSH. Arginine 93 and lysine 179 together coordinate ATP. Mg(2+) is bound at residue glutamate 244. Substrate contacts are provided by glycine 267, aspartate 268, and threonine 300. Aspartate 268 lines the Mg(2+) pocket.

Belongs to the pyruvate kinase family. Homotetramer. The cofactor is Mg(2+). Requires K(+) as cofactor.

The catalysed reaction is pyruvate + ATP = phosphoenolpyruvate + ADP + H(+). It functions in the pathway carbohydrate degradation; glycolysis; pyruvate from D-glyceraldehyde 3-phosphate: step 5/5. With respect to regulation, not activated by fructose-1,6-bisphosphate. Its function is as follows. May be used by cells under conditions in which the level of glycolytic flux is very low. This chain is Pyruvate kinase 2 (PYK2), found in Saccharomyces cerevisiae (strain ATCC 204508 / S288c) (Baker's yeast).